A 440-amino-acid chain; its full sequence is Thymidine phosphorylase (440 aa).

The protein belongs to the thymidine/pyrimidine-nucleoside phosphorylase family. Homodimer.

The catalysed reaction is thymidine + phosphate = 2-deoxy-alpha-D-ribose 1-phosphate + thymine. Its pathway is pyrimidine metabolism; dTMP biosynthesis via salvage pathway; dTMP from thymine: step 1/2. The enzymes which catalyze the reversible phosphorolysis of pyrimidine nucleosides are involved in the degradation of these compounds and in their utilization as carbon and energy sources, or in the rescue of pyrimidine bases for nucleotide synthesis. The protein is Thymidine phosphorylase of Escherichia coli O127:H6 (strain E2348/69 / EPEC).